The sequence spans 274 residues: Diaminopimelate epimerase (274 aa).

Substrate is bound by residues Asn11, Gln44, and Asn64. Cys73 functions as the Proton donor in the catalytic mechanism. Substrate contacts are provided by residues 74–75 (GN), Asn157, Asn190, and 208–209 (ER). Cys217 serves as the catalytic Proton acceptor. 218 to 219 (GS) serves as a coordination point for substrate.

The protein belongs to the diaminopimelate epimerase family. In terms of assembly, homodimer.

Its subcellular location is the cytoplasm. The enzyme catalyses (2S,6S)-2,6-diaminopimelate = meso-2,6-diaminopimelate. It functions in the pathway amino-acid biosynthesis; L-lysine biosynthesis via DAP pathway; DL-2,6-diaminopimelate from LL-2,6-diaminopimelate: step 1/1. Its function is as follows. Catalyzes the stereoinversion of LL-2,6-diaminopimelate (L,L-DAP) to meso-diaminopimelate (meso-DAP), a precursor of L-lysine and an essential component of the bacterial peptidoglycan. The chain is Diaminopimelate epimerase from Histophilus somni (strain 2336) (Haemophilus somnus).